We begin with the raw amino-acid sequence, 330 residues long: uncharacterized protein (330 aa).

The JmjC domain maps to 96 to 256 (AALEFDFTDL…LMLAALRKKL (161 aa)). Fe cation is bound by residues H145, D147, and H224.

It belongs to the ROX family. Fe(2+) is required as a cofactor.

This is an uncharacterized protein from Bacillus subtilis (strain 168).